Reading from the N-terminus, the 301-residue chain is Porphobilinogen deaminase (301 aa).

C242 is modified (S-(dipyrrolylmethanemethyl)cysteine).

It belongs to the HMBS family. Monomer. Requires dipyrromethane as cofactor.

The catalysed reaction is 4 porphobilinogen + H2O = hydroxymethylbilane + 4 NH4(+). It participates in porphyrin-containing compound metabolism; protoporphyrin-IX biosynthesis; coproporphyrinogen-III from 5-aminolevulinate: step 2/4. Functionally, tetrapolymerization of the monopyrrole PBG into the hydroxymethylbilane pre-uroporphyrinogen in several discrete steps. The sequence is that of Porphobilinogen deaminase from Rickettsia akari (strain Hartford).